A 351-amino-acid polypeptide reads, in one-letter code: Probable aldo-keto reductase 2 (351 aa).

The active-site Proton donor is Tyr67. Substrate is bound at residue His134. 213–223 (SPLGRGFFSAG) is a binding site for NADP(+). The tract at residues 317–351 (YASTDDVRGDRYPQAMANTTWQNSETPPLSSWKAQ) is disordered. Over residues 332–351 (MANTTWQNSETPPLSSWKAQ) the composition is skewed to polar residues.

This sequence belongs to the aldo/keto reductase family.

The chain is Probable aldo-keto reductase 2 from Oryza sativa subsp. indica (Rice).